A 598-amino-acid polypeptide reads, in one-letter code: Membrane protein insertase YidC (598 aa).

The helical transmembrane segment at 7-27 threads the bilayer; that stretch reads NYFIAIALSVLIVLGWQFLYM. A disordered region spans residues 37-71; that stretch reads AQEAQKAQQQTEQVQQPAAGGATPAPASGTAPSGQ. Residues 40–71 are compositionally biased toward low complexity; that stretch reads AQKAQQQTEQVQQPAAGGATPAPASGTAPSGQ. 4 helical membrane-spanning segments follow: residues 373–393, 447–467, 492–512, and 538–558; these read FFGN…ALFF, WPVA…YITI, LFGL…WPLI, and WMPL…VIYW.

The protein belongs to the OXA1/ALB3/YidC family. Type 1 subfamily. As to quaternary structure, interacts with the Sec translocase complex via SecD. Specifically interacts with transmembrane segments of nascent integral membrane proteins during membrane integration.

It is found in the cell inner membrane. Functionally, required for the insertion and/or proper folding and/or complex formation of integral membrane proteins into the membrane. Involved in integration of membrane proteins that insert both dependently and independently of the Sec translocase complex, as well as at least some lipoproteins. Aids folding of multispanning membrane proteins. The chain is Membrane protein insertase YidC from Rhizobium etli (strain CIAT 652).